Consider the following 592-residue polypeptide: Probable auxin efflux carrier component 1c (592 aa).

Over 1–6 (MITGAD) the chain is Extracellular. The helical transmembrane segment at 7 to 27 (FYHVMTAMVPLYVAMILAYGS) threads the bilayer. At 28-38 (VKWWRIFTPDQ) the chain is on the cytoplasmic side. A helical membrane pass occupies residues 39 to 59 (CSGINRFVALFAVPLLSFHFI). V51 contacts (indol-3-yl)acetate. Residues 60 to 70 (STNNPYTMNLR) are Extracellular-facing. Residues 71 to 91 (FIAADTLQKLIVLALLTLWSH) traverse the membrane as a helical segment. The Cytoplasmic portion of the chain corresponds to 92-100 (LSRRGSLEW). Residues 101 to 121 (TITLFSLSTLPNTLVMGIPLL) form a helical membrane-spanning segment. (indol-3-yl)acetate-binding residues include N112 and L114. At 122 to 131 (KGMYGEFSGS) the chain is on the extracellular side. Residues 132 to 152 (LMVQIVVLQCIIWYTLMLFMF) form a helical membrane-spanning segment. Y145 serves as a coordination point for (indol-3-yl)acetate. Topologically, residues 153–452 (EYRGARILIT…LIRNPNTYSS (300 aa)) are cytoplasmic. Disordered regions lie at residues 214–236 (RSDVYSRRSMGFSSTTPRPSNLT) and 282–331 (GATP…AKGE). The segment covering 224–236 (GFSSTTPRPSNLT) has biased composition (polar residues). The span at 309 to 318 (APNPAMAAPP) shows a compositional bias: pro residues. The chain crosses the membrane as a helical span at residues 453 to 473 (LIGLIWSLVCFRWNFEMPAII). Over 474-476 (LKS) the chain is Extracellular. Residues 477–497 (ISILSDAGLGMAMFSLGLFMA) form a helical membrane-spanning segment. The Cytoplasmic portion of the chain corresponds to 498 to 511 (LQPRIIACGNKVAT). A helical membrane pass occupies residues 512-532 (FAMAVRFLTGPAVMAAASIAV). Topologically, residues 533–537 (GLRGT) are extracellular. A helical transmembrane segment spans residues 538 to 558 (LLHVAIVQAALPQGIVPFVFA). I552 and V553 together coordinate (indol-3-yl)acetate. The Cytoplasmic segment spans residues 559-571 (KEYSVHPDILSTA). The helical transmembrane segment at 572–592 (VIFGMLIALPITLVYYILLGL) threads the bilayer.

This sequence belongs to the auxin efflux carrier (TC 2.A.69.1) family. As to quaternary structure, homodimer. As to expression, expressed at low levels in roots and leaves. Expressed in roots, stem bases, stems, leaves and young panicles.

Its subcellular location is the membrane. Functionally, may act as a component of the auxin efflux carrier. The sequence is that of Probable auxin efflux carrier component 1c from Oryza sativa subsp. japonica (Rice).